A 103-amino-acid chain; its full sequence is MNEDQEQITLVDENGNEELYDVLFTFESDDFGKSYILIYPAGKSDDEEVDIQAYALPADDDPANPSGGDLQLIESDEEWDMVESVLNTFLADGTIDPNAGSKD.

Belongs to the UPF0473 family.

This Levilactobacillus brevis (strain ATCC 367 / BCRC 12310 / CIP 105137 / JCM 1170 / LMG 11437 / NCIMB 947 / NCTC 947) (Lactobacillus brevis) protein is UPF0473 protein LVIS_1220.